A 1198-amino-acid polypeptide reads, in one-letter code: DNA polymerase (1198 aa).

Disordered stretches follow at residues 1–90, 179–198, and 906–931; these read MALV…TVVA, LEQPDGQGQAAEVEDHQPNP, and ALADSDAEESEDERAPTPFYSPPSGT. Residues 30 to 40 are compositionally biased toward low complexity; it reads QQPPRAAPAPA.

The protein belongs to the DNA polymerase type-B family. As to quaternary structure, heterodimer with the terminal protein; this heterodimer binds to bp 9 to 18 of the genome. Forms a complex with viral pTP, DBP and hosts NFIA and POU2F1/OCT1 for initiation of replication.

It localises to the host nucleus. It catalyses the reaction DNA(n) + a 2'-deoxyribonucleoside 5'-triphosphate = DNA(n+1) + diphosphate. Functionally, eukaryotic-type DNA polymerase involved in viral genomic replication. DNA synthesis is protein primed, and acts in a strand displacement replication. Assembles in complex with viral pTP, DBP, host NFIA and host POU2F1/OCT1 on viral origin of replication. The polymerase covalently transfers dCMP onto pTP, thereby initiating complementary strand synthesis. In Homo sapiens (Human), this protein is DNA polymerase.